Reading from the N-terminus, the 466-residue chain is Chromosomal replication initiator protein DnaA (466 aa).

A domain I, interacts with DnaA modulators region spans residues 1 to 85 (MSLSLWQHCL…FEVGNKPVSA (85 aa)). The tract at residues 82–122 (PVSARTTESVPKTVTHPAVNSTPTNSQPVRPSWDNQPQSQL) is disordered. The segment covering 85-122 (ARTTESVPKTVTHPAVNSTPTNSQPVRPSWDNQPQSQL) has biased composition (polar residues). The domain II stretch occupies residues 85-129 (ARTTESVPKTVTHPAVNSTPTNSQPVRPSWDNQPQSQLPELNYRS). The tract at residues 130-346 (NVNPKHKFDN…GALNRVIANA (217 aa)) is domain III, AAA+ region. Residues Gly-174, Gly-176, Lys-177, and Thr-178 each coordinate ATP. The domain IV, binds dsDNA stretch occupies residues 347 to 466 (NFTGRAITID…FSNLIRTLSS (120 aa)).

Belongs to the DnaA family. As to quaternary structure, oligomerizes as a right-handed, spiral filament on DNA at oriC.

It is found in the cytoplasm. In terms of biological role, plays an essential role in the initiation and regulation of chromosomal replication. ATP-DnaA binds to the origin of replication (oriC) to initiate formation of the DNA replication initiation complex once per cell cycle. Binds the DnaA box (a 9 base pair repeat at the origin) and separates the double-stranded (ds)DNA. Forms a right-handed helical filament on oriC DNA; dsDNA binds to the exterior of the filament while single-stranded (ss)DNA is stabiized in the filament's interior. The ATP-DnaA-oriC complex binds and stabilizes one strand of the AT-rich DNA unwinding element (DUE), permitting loading of DNA polymerase. After initiation quickly degrades to an ADP-DnaA complex that is not apt for DNA replication. Binds acidic phospholipids. The protein is Chromosomal replication initiator protein DnaA of Proteus mirabilis (strain HI4320).